The primary structure comprises 251 residues: Transcriptional cofactor Bfc (251 aa).

Interacts with srp (via GATA-type Zn-finger domain); this interaction enhances srp binding to the promoter of crq/croquemort.

The protein resides in the nucleus. In terms of biological role, transcriptional cofactor involved in efferocytosis. Together with srp mediates expression of the phagocytic receptor crq/croquemort in response to apoptotic cells, and is up-regulated by crq/croquemort in a positive feedback mechanism. Involved in macrophage engulfment and clearance of apoptotic cells during embryogenesis. In Drosophila melanogaster (Fruit fly), this protein is Transcriptional cofactor Bfc.